Reading from the N-terminus, the 427-residue chain is DEAD-box ATP-dependent RNA helicase 56 (427 aa).

Residues 1 to 30 (MGDARDNEAYEEELLDYEEEDEKVPDSGNK) are disordered. Positions 9 to 23 (AYEEELLDYEEEDEK) are enriched in acidic residues. A Q motif motif is present at residues 46-74 (SGFRDFLLKPELLRAIVDSGFEHPSEVQH). In terms of domain architecture, Helicase ATP-binding spans 77–250 (IPQAILGMDV…KKFMQDPMEI (174 aa)). Position 90-97 (90-97 (AKSGMGKT)) interacts with ATP. A DECD box motif is present at residues 197–200 (DECD). Residues 278–423 (KLNDLLDALD…ELPEQIDTST (146 aa)) enclose the Helicase C-terminal domain.

Belongs to the DEAD box helicase family. DECD subfamily. Interacts with ALY2 and MOS11.

It localises to the nucleus. It carries out the reaction ATP + H2O = ADP + phosphate + H(+). In terms of biological role, ATP-dependent RNA helicase involved in pre-mRNA splicing. Required for the export of mRNA out of the nucleus. In addition to ssRNA and dsRNA, binds dsDNA, but not ssDNA. In Arabidopsis thaliana (Mouse-ear cress), this protein is DEAD-box ATP-dependent RNA helicase 56 (RH56).